Consider the following 457-residue polypeptide: Probable ECA polymerase (457 aa).

11 helical membrane passes run 3 to 23, 41 to 61, 65 to 85, 118 to 138, 154 to 174, 181 to 201, 206 to 226, 227 to 247, 340 to 360, 377 to 397, and 408 to 428; these read LLQF…ILTL, MLFL…VFGF, VVPA…YAIY, IMAL…GFLL, GVAL…VYFL, WLLF…IVGG, IIIA…ITLW, MLAL…LKRY, LVVM…GLII, YKAA…IVLA, and VVFF…LYWL.

The protein belongs to the WzyE family. As to quaternary structure, probably part of a complex composed of WzxE, WzyE and WzzE.

Its subcellular location is the cell inner membrane. The protein operates within bacterial outer membrane biogenesis; enterobacterial common antigen biosynthesis. Functionally, probably involved in the polymerization of enterobacterial common antigen (ECA) trisaccharide repeat units. This Erwinia tasmaniensis (strain DSM 17950 / CFBP 7177 / CIP 109463 / NCPPB 4357 / Et1/99) protein is Probable ECA polymerase.